The chain runs to 228 residues: Ribonuclease 3 (228 aa).

The RNase III domain occupies 5-134; that stretch reads RSKLEKDYGI…FLGALLLDKG (130 aa). Residue E47 coordinates Mg(2+). The active site involves D51. 2 residues coordinate Mg(2+): D120 and E123. E123 is an active-site residue. The 69-residue stretch at 160–228 folds into the DRBM domain; it reads DYKTSLQELL…AAKNALATLQ (69 aa).

This sequence belongs to the ribonuclease III family. Homodimer. Mg(2+) serves as cofactor.

The protein localises to the cytoplasm. It carries out the reaction Endonucleolytic cleavage to 5'-phosphomonoester.. Functionally, digests double-stranded RNA. Involved in the processing of primary rRNA transcript to yield the immediate precursors to the large and small rRNAs (23S and 16S). Processes some mRNAs, and tRNAs when they are encoded in the rRNA operon. Processes pre-crRNA and tracrRNA of type II CRISPR loci if present in the organism. This chain is Ribonuclease 3, found in Streptococcus agalactiae serotype III (strain NEM316).